A 473-amino-acid chain; its full sequence is Sorting nexin-17 (473 aa).

Positions 1-108 constitute a PX domain; the sequence is MHFSIPETEV…SFLRKAQQET (108 aa). R35, S37, K61, and R74 together coordinate a 1,2-diacyl-sn-glycero-3-phospho-(1D-myo-inositol-3-phosphate). One can recognise a Ras-associating domain in the interval 114–205; sequence EEVQLEIYLS…YRIILRKSYW (92 aa). The interval 114–433 is FERM-like; that stretch reads EEVQLEIYLS…DPNREQVVKL (320 aa). Residues 269 to 433 form a PTB-like F3 module region; that stretch reads GYIKFDPCIT…DPNREQVVKL (165 aa). Residues 391–431 form a disordered region; that stretch reads SIKKQMQKKRLNGSLQRSDSQQAVKSPPILDSPDPNREQVV. Positions 403–414 are enriched in polar residues; that stretch reads GSLQRSDSQQAV.

It belongs to the sorting nexin family. In terms of assembly, monomer. Interacts with CCDC22, CCDC93, DSCR3 and VPS35L; the interaction with DSCR3 is direct and associates SNX17 with the retriever and CCC complexes.

The protein resides in the cytoplasm. It is found in the early endosome. It localises to the cytoplasmic vesicle membrane. Critical regulator of endosomal recycling of numerous surface proteins, including integrins, signaling receptor and channels. Binds to NPxY sequences in the cytoplasmic tails of target cargos. Associates with retriever and CCC complexes to prevent lysosomal degradation and promote cell surface recycling of numerous cargos such as integrins ITGB1, ITGB5 and their associated alpha subunits. Also required for maintenance of normal cell surface levels of APP and LRP1. Interacts with membranes containing phosphatidylinositol 3-phosphate (PtdIns(3P)). The chain is Sorting nexin-17 (snx17) from Danio rerio (Zebrafish).